The chain runs to 431 residues: Glucose-6-phosphate isomerase (431 aa).

Glutamate 284 (proton donor) is an active-site residue. Residues histidine 305 and lysine 420 contribute to the active site.

The protein belongs to the GPI family.

The protein resides in the cytoplasm. It carries out the reaction alpha-D-glucose 6-phosphate = beta-D-fructose 6-phosphate. It participates in carbohydrate biosynthesis; gluconeogenesis. The protein operates within carbohydrate degradation; glycolysis; D-glyceraldehyde 3-phosphate and glycerone phosphate from D-glucose: step 2/4. In terms of biological role, catalyzes the reversible isomerization of glucose-6-phosphate to fructose-6-phosphate. The chain is Glucose-6-phosphate isomerase from Mycoplasma genitalium (strain ATCC 33530 / DSM 19775 / NCTC 10195 / G37) (Mycoplasmoides genitalium).